Here is an 81-residue protein sequence, read N- to C-terminus: Large ribosomal subunit protein bL31 (81 aa).

Cys16, Cys18, Cys38, and Cys41 together coordinate Zn(2+).

The protein belongs to the bacterial ribosomal protein bL31 family. Type A subfamily. In terms of assembly, part of the 50S ribosomal subunit. Zn(2+) is required as a cofactor.

In terms of biological role, binds the 23S rRNA. This Mycobacterium marinum (strain ATCC BAA-535 / M) protein is Large ribosomal subunit protein bL31.